The following is a 490-amino-acid chain: Colicin-5 (490 aa).

Residues 1-20 (MDKVTDNSPDVESTESTEGS) show a composition bias toward polar residues. Disordered regions lie at residues 1-29 (MDKV…VDTG) and 146-171 (QKAR…EIAR). The span at 146–170 (QKAREEAEAAEKALREAERQRDEIA) shows a compositional bias: basic and acidic residues. The chain crosses the membrane as a helical span at residues 447–467 (IVALMFSFIVGVPLGFWGIAI).

This sequence belongs to the channel forming colicin family.

It is found in the host membrane. This colicin is a channel-forming colicin. This class of transmembrane toxins depolarize the cytoplasmic membrane, leading to dissipation of cellular energy. In terms of biological role, colicins are polypeptide toxins produced by and active against E.coli and closely related bacteria. The polypeptide is Colicin-5 (cfa) (Escherichia coli).